The sequence spans 460 residues: NADH-ubiquinone oxidoreductase chain 4 (460 aa).

Helical transmembrane passes span 20–42, 61–81, 94–113, 117–139, 148–168, 195–215, 225–245, 258–278, 285–304, 308–330, 351–371, 394–414, and 436–456; these read AKWL…LSWL, PLST…ILAS, RAYI…AFGA, IMFY…RWGN, TYFL…LLLM, LWWA…GVHL, PIAG…YGMM, LAYP…SICL, SLIA…GILI, WGFT…LFCL, MILP…LALP, LILT…LFLM, and LLII…ELMW.

The protein belongs to the complex I subunit 4 family.

The protein resides in the mitochondrion membrane. It carries out the reaction a ubiquinone + NADH + 5 H(+)(in) = a ubiquinol + NAD(+) + 4 H(+)(out). In terms of biological role, core subunit of the mitochondrial membrane respiratory chain NADH dehydrogenase (Complex I) that is believed to belong to the minimal assembly required for catalysis. Complex I functions in the transfer of electrons from NADH to the respiratory chain. The immediate electron acceptor for the enzyme is believed to be ubiquinone. This chain is NADH-ubiquinone oxidoreductase chain 4 (MT-ND4), found in Oncorhynchus mykiss (Rainbow trout).